A 248-amino-acid chain; its full sequence is Uracil-DNA glycosylase (248 aa).

D85 functions as the Proton acceptor in the catalytic mechanism.

The protein belongs to the uracil-DNA glycosylase (UDG) superfamily. UNG family.

The protein resides in the cytoplasm. It carries out the reaction Hydrolyzes single-stranded DNA or mismatched double-stranded DNA and polynucleotides, releasing free uracil.. Its function is as follows. Excises uracil residues from the DNA which can arise as a result of misincorporation of dUMP residues by DNA polymerase or due to deamination of cytosine. The sequence is that of Uracil-DNA glycosylase from Deinococcus deserti (strain DSM 17065 / CIP 109153 / LMG 22923 / VCD115).